The sequence spans 397 residues: Tryptophan synthase beta chain (397 aa).

Lys86 bears the N6-(pyridoxal phosphate)lysine mark.

The protein belongs to the TrpB family. In terms of assembly, tetramer of two alpha and two beta chains. Requires pyridoxal 5'-phosphate as cofactor.

It carries out the reaction (1S,2R)-1-C-(indol-3-yl)glycerol 3-phosphate + L-serine = D-glyceraldehyde 3-phosphate + L-tryptophan + H2O. Its pathway is amino-acid biosynthesis; L-tryptophan biosynthesis; L-tryptophan from chorismate: step 5/5. Functionally, the beta subunit is responsible for the synthesis of L-tryptophan from indole and L-serine. The protein is Tryptophan synthase beta chain of Edwardsiella ictaluri (strain 93-146).